We begin with the raw amino-acid sequence, 220 residues long: Uracil-DNA glycosylase (220 aa).

The Proton acceptor role is filled by D65.

Belongs to the uracil-DNA glycosylase (UDG) superfamily. UNG family.

It localises to the cytoplasm. The catalysed reaction is Hydrolyzes single-stranded DNA or mismatched double-stranded DNA and polynucleotides, releasing free uracil.. Excises uracil residues from the DNA which can arise as a result of misincorporation of dUMP residues by DNA polymerase or due to deamination of cytosine. This chain is Uracil-DNA glycosylase, found in Amoebophilus asiaticus (strain 5a2).